The sequence spans 112 residues: uncharacterized protein (112 aa).

Residues 91 to 112 are disordered; the sequence is ENQRKKGTRKRRSSEVDSKEKS. Residues 103–112 show a composition bias toward basic and acidic residues; that stretch reads SSEVDSKEKS.

This is an uncharacterized protein from Caenorhabditis elegans.